Reading from the N-terminus, the 339-residue chain is Phenylalanine--tRNA ligase alpha subunit (339 aa).

Glu247 is a binding site for Mg(2+).

The protein belongs to the class-II aminoacyl-tRNA synthetase family. Phe-tRNA synthetase alpha subunit type 1 subfamily. As to quaternary structure, tetramer of two alpha and two beta subunits. Requires Mg(2+) as cofactor.

It localises to the cytoplasm. The catalysed reaction is tRNA(Phe) + L-phenylalanine + ATP = L-phenylalanyl-tRNA(Phe) + AMP + diphosphate + H(+). The sequence is that of Phenylalanine--tRNA ligase alpha subunit from Deinococcus geothermalis (strain DSM 11300 / CIP 105573 / AG-3a).